Here is a 387-residue protein sequence, read N- to C-terminus: Phosphoglycerate kinase (387 aa).

Residues 21-23, Arg-36, 59-62, Arg-114, and Arg-147 each bind substrate; these read DLN and HLGR. ATP is bound by residues Lys-198, Glu-314, and 340 to 343; that span reads GGDT.

The protein belongs to the phosphoglycerate kinase family. Monomer.

The protein localises to the cytoplasm. The catalysed reaction is (2R)-3-phosphoglycerate + ATP = (2R)-3-phospho-glyceroyl phosphate + ADP. The protein operates within carbohydrate degradation; glycolysis; pyruvate from D-glyceraldehyde 3-phosphate: step 2/5. This is Phosphoglycerate kinase from Erwinia tasmaniensis (strain DSM 17950 / CFBP 7177 / CIP 109463 / NCPPB 4357 / Et1/99).